Consider the following 344-residue polypeptide: Interactor of constitutive active ROPs 1 (344 aa).

Disordered stretches follow at residues Met1–Leu74, Glu92–Asp139, His186–Val218, and Phe307–Lys344. The span at Ser19–Ser29 shows a compositional bias: low complexity. Residues Gln60–Lys108 adopt a coiled-coil conformation. 3 stretches are compositionally biased toward basic and acidic residues: residues Ala93–His103, Arg114–Asp139, and His186–Ser195. The stretch at Val145–Ala273 forms a coiled coil. Positions Leu196–Lys211 are enriched in polar residues.

This sequence belongs to the ICR family. Homooligomer. Interacts with ARAC3, ARAC4, ARAC8, ARAC11 and SEC3A, but not with ICR2 or EXO70A1. In terms of tissue distribution, expressed in mature and germinating pollen. Expressed throughout the embryo but not in the hypophysis and quiescent center (QC). In roots, absent from the QC and the stem cells.

Its subcellular location is the cell membrane. It is found in the nucleus. In terms of biological role, acts as a scaffold, mediating interaction of ROPs with different proteins. Required for primary and adventitious root maintenance, but not for their formation. Promotes the stabilization of ARAC11 on the plasma membrane of the pollen tube initiation site but not the activation of ARAC11. Regulates directionality of polar auxin transport, and is required for the formation of a stable auxin maximum and tip localized auxin gradient during embryogenesis, organogenesis, and meristem activity. Involved in exocytosis and in the recycling of PIN proteins back to the plasma membrane. The polypeptide is Interactor of constitutive active ROPs 1 (ICR1) (Arabidopsis thaliana (Mouse-ear cress)).